Consider the following 286-residue polypeptide: Gap junction alpha-6 protein (286 aa).

Over 1 to 23 (MSDWSALHQLLEKVQPYSTAGGK) the chain is Cytoplasmic. Residues 24-41 (VWIKVLFIFRILLLGTAI) traverse the membrane as a helical segment. Topologically, residues 42 to 76 (ESAWSDEQFEFHCNTQQPGCENVCYDQAFPISHVR) are extracellular. The helical transmembrane segment at 77-99 (LWVLQVIFVSVPTLLHLAHVYYV) threads the bilayer. Over 100–151 (IRQNEKLKKQEEEELKVAHFNGASGERRLQKHTGKHIKCGSKEHGNRKMRGR) the chain is Cytoplasmic. A helical transmembrane segment spans residues 152 to 174 (LLLTYMASIFFKSVFEVAFLLIQ). Over 175–209 (WYLYGFTLSAVYICEQSPCPHRVDCFLSRPTEKTI) the chain is Extracellular. A helical transmembrane segment spans residues 210–232 (FILFMLVVSMVSFVLNVIELFYV). Topologically, residues 233-286 (LFKAIKNHLGNEKEEVYCNPVELQKPSCVSSSAVLTTICSSDQVVPVGLSSFYM) are cytoplasmic.

It belongs to the connexin family. Alpha-type (group II) subfamily. As to quaternary structure, a connexon is composed of a hexamer of connexins. In terms of tissue distribution, expressed in testis.

It is found in the cell membrane. It localises to the cell junction. The protein resides in the gap junction. In terms of biological role, one gap junction consists of a cluster of closely packed pairs of transmembrane channels, the connexons, through which materials of low MW diffuse from one cell to a neighboring cell. In Rattus norvegicus (Rat), this protein is Gap junction alpha-6 protein (Gja6).